The sequence spans 179 residues: D-glycero-beta-D-manno-heptose-1,7-bisphosphate 7-phosphatase (179 aa).

D7 functions as the Nucleophile in the catalytic mechanism. Mg(2+)-binding residues include D7 and D9. A substrate-binding site is contributed by D7. The active-site Proton donor is the D9. Substrate is bound by residues 15–19 (DSDAF), 50–53 (TNQS), and R57. C89, H91, C97, and C99 together coordinate Zn(2+). R100 contributes to the substrate binding site. D126 contributes to the Mg(2+) binding site. R129 serves as a coordination point for substrate.

Monomer. Mg(2+) serves as cofactor. Zn(2+) is required as a cofactor.

The protein localises to the cytoplasm. The catalysed reaction is D-glycero-beta-D-manno-heptose 1,7-bisphosphate + H2O = D-glycero-beta-D-manno-heptose 1-phosphate + phosphate. It participates in nucleotide-sugar biosynthesis; ADP-L-glycero-beta-D-manno-heptose biosynthesis; ADP-L-glycero-beta-D-manno-heptose from D-glycero-beta-D-manno-heptose 7-phosphate: step 2/4. The protein operates within bacterial outer membrane biogenesis; LPS core biosynthesis. Converts the D-glycero-beta-D-manno-heptose 1,7-bisphosphate (beta-HBP) intermediate into D-glycero-beta-D-manno-heptose 1-phosphate by removing the phosphate group at the C-7 position. This is D-glycero-beta-D-manno-heptose-1,7-bisphosphate 7-phosphatase from Bordetella bronchiseptica (strain ATCC BAA-588 / NCTC 13252 / RB50) (Alcaligenes bronchisepticus).